The chain runs to 229 residues: Potassium/proton antiporter CemA (229 aa).

Helical transmembrane passes span 6 to 26 (AFIP…ISLC), 107 to 127 (ILHF…SFWG), and 189 to 209 (ILSG…KYWI).

Belongs to the CemA family.

The protein localises to the plastid. The protein resides in the chloroplast inner membrane. The catalysed reaction is K(+)(in) + H(+)(out) = K(+)(out) + H(+)(in). Its function is as follows. Contributes to K(+)/H(+) antiport activity by supporting proton efflux to control proton extrusion and homeostasis in chloroplasts in a light-dependent manner to modulate photosynthesis. Prevents excessive induction of non-photochemical quenching (NPQ) under continuous-light conditions. Indirectly promotes efficient inorganic carbon uptake into chloroplasts. This chain is Potassium/proton antiporter CemA, found in Draba nemorosa (Woodland whitlowgrass).